Reading from the N-terminus, the 525-residue chain is PE-PGRS family protein PE_PGRS47 (525 aa).

The PE domain occupies Met1–Ala93. Positions Val506–Ser525 are disordered. The span at Glu514–Ser525 shows a compositional bias: low complexity.

This sequence belongs to the mycobacterial PE family. PGRS subfamily.

The protein resides in the secreted. It localises to the cell surface. It is found in the host cytoplasm. The protein localises to the host cytosol. In terms of biological role, contributes to evasion of both innate and adaptive immunity. Inhibits autophagy in infected host phagocytes and inhibits major histocompatibility complex (MHC) class II antigen presentation by mycobacteria-infected dendritic cells. Has an important role in the growth and survival of M.tuberculosis, particularly during intracellular growth and in the later chronic phase of infection. The protein is PE-PGRS family protein PE_PGRS47 of Mycobacterium tuberculosis (strain ATCC 25618 / H37Rv).